Consider the following 160-residue polypeptide: Ribosomal RNA large subunit methyltransferase H (160 aa).

S-adenosyl-L-methionine contacts are provided by leucine 76 and glycine 108.

It belongs to the RNA methyltransferase RlmH family. Homodimer.

It is found in the cytoplasm. The catalysed reaction is pseudouridine(1915) in 23S rRNA + S-adenosyl-L-methionine = N(3)-methylpseudouridine(1915) in 23S rRNA + S-adenosyl-L-homocysteine + H(+). Specifically methylates the pseudouridine at position 1915 (m3Psi1915) in 23S rRNA. The protein is Ribosomal RNA large subunit methyltransferase H of Rhodopseudomonas palustris (strain ATCC BAA-98 / CGA009).